A 297-amino-acid polypeptide reads, in one-letter code: 4-hydroxy-tetrahydrodipicolinate synthase (297 aa).

Thr45 lines the pyruvate pocket. Tyr133 acts as the Proton donor/acceptor in catalysis. Lys161 functions as the Schiff-base intermediate with substrate in the catalytic mechanism. Ile205 contacts pyruvate.

It belongs to the DapA family. In terms of assembly, homotetramer; dimer of dimers.

It localises to the cytoplasm. The catalysed reaction is L-aspartate 4-semialdehyde + pyruvate = (2S,4S)-4-hydroxy-2,3,4,5-tetrahydrodipicolinate + H2O + H(+). The protein operates within amino-acid biosynthesis; L-lysine biosynthesis via DAP pathway; (S)-tetrahydrodipicolinate from L-aspartate: step 3/4. Functionally, catalyzes the condensation of (S)-aspartate-beta-semialdehyde [(S)-ASA] and pyruvate to 4-hydroxy-tetrahydrodipicolinate (HTPA). The polypeptide is 4-hydroxy-tetrahydrodipicolinate synthase (Dichelobacter nodosus (strain VCS1703A)).